Consider the following 1075-residue polypeptide: Protein EXPORTIN 1A (1075 aa).

In terms of domain architecture, Importin N-terminal spans 37–103; the sequence is ADQILRDLQA…KNYISEVIVQ (67 aa). 12 HEAT repeats span residues 91–130, 135–171, 232–267, 336–373, 388–425, 474–513, 563–600, 612–649, 682–719, 756–793, 798–835, and 894–934; these read DGMKNYISEVIVQLSSNEASFRSERLYVNKLNVILVQIVK, AKWTSFIPDLVAAAKTSETICENCMAILKLLSEEVFD, IFESTLLETLLKFFPVPAYRNLTIQCLTEVAALNFG, SLLLAGLEYLINISYVDDTEVFKVCLDYWNSLVLELFD, MGLQPFLPGMVDGLGSQVMQRRQLYSHPMSKLRGLMIN, DTEKQMLRKLNKQLSGEEWAWNNLNTLCWAIGSISGSMAE, KFLKTVVNKLFEFMHETHPGVQDMACDTFLKIVQKCKR, PFVSELLTGLATTVQDLEPHQIHSFYESVGNMIQAESD, LKDQVVIRTVLNILQTNTSAATSLGTYFLSQISLIFLD, RETLKLIETFLDKAEDQPHIGKQFVPPMMESVLGDYAR, ARESEVLSLFATIINKYKATMLDDVPHIFEAVFQCTLE, and ETGL…VLTD.

The protein belongs to the exportin family. As to quaternary structure, interacts with RAN1. In terms of tissue distribution, expressed ubiquitously, with higher levels in stems, inflorescences and roots. Present in mature pollen grains, unpollinated pistils, and 2-week-old seedlings.

The protein resides in the nucleus. Its subcellular location is the nuclear pore complex. It is found in the nucleus membrane. Its function is as follows. Receptor for the leucine-rich nuclear export signal (NES). Binds cooperatively to the NES on its target protein and to the small GTPase Ran in its active GTP-bound form. Required for the maternal-to-embryonic transition and during gametophyte development. Involved in heat-induced oxidative stress basal resistance. In Arabidopsis thaliana (Mouse-ear cress), this protein is Protein EXPORTIN 1A.